The primary structure comprises 332 residues: Alpha/beta hydrolase domain-containing protein aho-3 (332 aa).

A compositionally biased stretch (low complexity) spans M1–P15. The interval M1–G24 is disordered. Residues S191, D256, and H285 each act as charge relay system in the active site.

It belongs to the AB hydrolase superfamily. ABHD17 family. In terms of processing, palmitoylated on cysteine residues located in a cysteine cluster at the N-terminus which promotes membrane localization and localization to sensory neuron endings. Expressed in a subset of neurons including AIY, HSN, ADF, AFD, AWC, AWB and NSM, hypodermis, pharyngeal muscle and intestine.

It is found in the cell membrane. The protein resides in the cytoplasmic vesicle membrane. It carries out the reaction S-hexadecanoyl-L-cysteinyl-[protein] + H2O = L-cysteinyl-[protein] + hexadecanoate + H(+). In terms of biological role, hydrolyzes fatty acids from S-acylated cysteine residues in proteins. Acts in sensory neurons including AWC to regulate starvation-induced thermotaxis plasticity and salt learning behavior. This is Alpha/beta hydrolase domain-containing protein aho-3 from Caenorhabditis elegans.